The sequence spans 521 residues: uncharacterized protein (521 aa).

The tract at residues Met1–Lys25 is disordered. Helical transmembrane passes span Gly68–Leu88, Val114–Val134, Val160–Gly180, Val192–Leu212, Ala290–Trp310, and Leu399–Ile419.

It localises to the cell membrane. This is an uncharacterized protein from Mycobacterium bovis (strain ATCC BAA-935 / AF2122/97).